The chain runs to 302 residues: uncharacterized protein (302 aa).

The signal sequence occupies residues 1–28; it reads MNKLTAQNLLKKSRFLKYSLLTSISVGA.

This is an uncharacterized protein from Rickettsia prowazekii (strain Madrid E).